Reading from the N-terminus, the 1179-residue chain is Tubulin glycylase 3B (1179 aa).

Polar residues predominate over residues 177–199; the sequence is NKGQTNNSNRENGGNFHSEQSPK. 4 disordered regions span residues 177 to 208, 250 to 278, 592 to 625, and 853 to 890; these read NKGQ…VVSG, QQPQ…LPLS, KVLS…AVQQ, and QKQH…LKQD. Positions 592–601 are enriched in basic and acidic residues; it reads KVLSNTKSKD. Polar residues-rich tracts occupy residues 614-625 and 881-890; these read KSKSNNQNAVQQ and AQSSTSLKQD. The region spanning 790–1152 is the TTL domain; the sequence is FIDFYETVDF…SMAKKGTKKN (363 aa). ATP contacts are provided by residues 965–968, K978, and D980; that span reads QKYI.

It localises to the cell projection. The protein resides in the cilium. The protein localises to the cytoplasm. Its subcellular location is the cytoskeleton. It is found in the cilium axoneme. In terms of biological role, polyglycylase which modifies tubulin, generating side chains of glycine on the gamma-carboxyl groups of specific glutamate residues within the C-terminal tail of tubulin. Polyglycylates tubulin, with a preference for alpha-tubulin toward beta-tubulin. This chain is Tubulin glycylase 3B (TTLL3B), found in Tetrahymena thermophila (strain SB210).